The primary structure comprises 173 residues: Probable chemoreceptor glutamine deamidase CheD (173 aa).

The protein belongs to the CheD family.

It carries out the reaction L-glutaminyl-[protein] + H2O = L-glutamyl-[protein] + NH4(+). Probably deamidates glutamine residues to glutamate on methyl-accepting chemotaxis receptors (MCPs), playing an important role in chemotaxis. The sequence is that of Probable chemoreceptor glutamine deamidase CheD from Haloarcula marismortui (strain ATCC 43049 / DSM 3752 / JCM 8966 / VKM B-1809) (Halobacterium marismortui).